The primary structure comprises 463 residues: tRNA modification GTPase MnmE (463 aa).

Arg26, Glu88, and Arg127 together coordinate (6S)-5-formyl-5,6,7,8-tetrahydrofolate. Positions 224–383 (GLATAIIGRP…LEQRIAKMFF (160 aa)) constitute a TrmE-type G domain. Asn234 lines the K(+) pocket. Residues 234 to 239 (NVGKSS), 253 to 259 (TDVAGTT), and 278 to 281 (DTAG) contribute to the GTP site. Ser238 is a Mg(2+) binding site. Residues Thr253, Val255, and Thr258 each coordinate K(+). Thr259 lines the Mg(2+) pocket. Position 463 (Lys463) interacts with (6S)-5-formyl-5,6,7,8-tetrahydrofolate.

It belongs to the TRAFAC class TrmE-Era-EngA-EngB-Septin-like GTPase superfamily. TrmE GTPase family. As to quaternary structure, homodimer. Heterotetramer of two MnmE and two MnmG subunits. K(+) is required as a cofactor.

The protein localises to the cytoplasm. In terms of biological role, exhibits a very high intrinsic GTPase hydrolysis rate. Involved in the addition of a carboxymethylaminomethyl (cmnm) group at the wobble position (U34) of certain tRNAs, forming tRNA-cmnm(5)s(2)U34. The polypeptide is tRNA modification GTPase MnmE (Lactiplantibacillus plantarum (strain ATCC BAA-793 / NCIMB 8826 / WCFS1) (Lactobacillus plantarum)).